A 445-amino-acid chain; its full sequence is Trigger factor (445 aa).

The 86-residue stretch at 162–247 (GDQVTIDAIG…IKAVHTAEPT (86 aa)) folds into the PPIase FKBP-type domain.

This sequence belongs to the FKBP-type PPIase family. Tig subfamily.

The protein localises to the cytoplasm. The enzyme catalyses [protein]-peptidylproline (omega=180) = [protein]-peptidylproline (omega=0). Functionally, involved in protein export. Acts as a chaperone by maintaining the newly synthesized protein in an open conformation. Functions as a peptidyl-prolyl cis-trans isomerase. This Rickettsia peacockii (strain Rustic) protein is Trigger factor.